Here is a 110-residue protein sequence, read N- to C-terminus: DNA-directed RNA polymerase subunit omega (110 aa).

This sequence belongs to the RNA polymerase subunit omega family. In terms of assembly, the RNAP catalytic core consists of 2 alpha, 1 beta, 1 beta' and 1 omega subunit. When a sigma factor is associated with the core the holoenzyme is formed, which can initiate transcription.

The enzyme catalyses RNA(n) + a ribonucleoside 5'-triphosphate = RNA(n+1) + diphosphate. Functionally, promotes RNA polymerase assembly. Latches the N- and C-terminal regions of the beta' subunit thereby facilitating its interaction with the beta and alpha subunits. In Mycobacterium leprae (strain Br4923), this protein is DNA-directed RNA polymerase subunit omega.